The following is a 290-amino-acid chain: Protease HtpX (290 aa).

2 consecutive transmembrane segments (helical) span residues Leu6–Phe26 and Ile36–Leu56. A Zn(2+)-binding site is contributed by His143. Glu144 is an active-site residue. His147 provides a ligand contact to Zn(2+). The next 2 helical transmembrane spans lie at Leu158–Ile178 and Ile200–Phe220. A Zn(2+)-binding site is contributed by Glu225.

Belongs to the peptidase M48B family. It depends on Zn(2+) as a cofactor.

It localises to the cell inner membrane. The chain is Protease HtpX from Aeromonas hydrophila subsp. hydrophila (strain ATCC 7966 / DSM 30187 / BCRC 13018 / CCUG 14551 / JCM 1027 / KCTC 2358 / NCIMB 9240 / NCTC 8049).